A 741-amino-acid polypeptide reads, in one-letter code: 1,4-alpha-glucan branching enzyme GlgB (741 aa).

Catalysis depends on Asp-420, which acts as the Nucleophile. Catalysis depends on Glu-473, which acts as the Proton donor.

It belongs to the glycosyl hydrolase 13 family. GlgB subfamily. Monomer.

The catalysed reaction is Transfers a segment of a (1-&gt;4)-alpha-D-glucan chain to a primary hydroxy group in a similar glucan chain.. The protein operates within glycan biosynthesis; glycogen biosynthesis. Functionally, catalyzes the formation of the alpha-1,6-glucosidic linkages in glycogen by scission of a 1,4-alpha-linked oligosaccharide from growing alpha-1,4-glucan chains and the subsequent attachment of the oligosaccharide to the alpha-1,6 position. The polypeptide is 1,4-alpha-glucan branching enzyme GlgB (Pseudomonas syringae pv. syringae (strain B728a)).